The sequence spans 336 residues: Pyridoxal 5'-phosphate synthase subunit PdxS (336 aa).

D-ribose 5-phosphate is bound at residue aspartate 30. Residue lysine 87 is the Schiff-base intermediate with D-ribose 5-phosphate of the active site. Residue glycine 159 participates in D-ribose 5-phosphate binding. Arginine 171 is a D-glyceraldehyde 3-phosphate binding site. Residues glycine 257 and 278-279 (GS) contribute to the D-ribose 5-phosphate site.

The protein belongs to the PdxS/SNZ family. As to quaternary structure, in the presence of PdxT, forms a dodecamer of heterodimers.

The catalysed reaction is aldehydo-D-ribose 5-phosphate + D-glyceraldehyde 3-phosphate + L-glutamine = pyridoxal 5'-phosphate + L-glutamate + phosphate + 3 H2O + H(+). The protein operates within cofactor biosynthesis; pyridoxal 5'-phosphate biosynthesis. Functionally, catalyzes the formation of pyridoxal 5'-phosphate from ribose 5-phosphate (RBP), glyceraldehyde 3-phosphate (G3P) and ammonia. The ammonia is provided by the PdxT subunit. Can also use ribulose 5-phosphate and dihydroxyacetone phosphate as substrates, resulting from enzyme-catalyzed isomerization of RBP and G3P, respectively. In Thermoplasma volcanium (strain ATCC 51530 / DSM 4299 / JCM 9571 / NBRC 15438 / GSS1), this protein is Pyridoxal 5'-phosphate synthase subunit PdxS.